The chain runs to 279 residues: 4-hydroxy-3-methylbut-2-enyl diphosphate reductase (279 aa).

Cys12 contributes to the [4Fe-4S] cluster binding site. (2E)-4-hydroxy-3-methylbut-2-enyl diphosphate-binding residues include His41 and His74. 2 residues coordinate dimethylallyl diphosphate: His41 and His74. His41 and His74 together coordinate isopentenyl diphosphate. Cys96 contributes to the [4Fe-4S] cluster binding site. (2E)-4-hydroxy-3-methylbut-2-enyl diphosphate is bound at residue His124. Position 124 (His124) interacts with dimethylallyl diphosphate. Isopentenyl diphosphate is bound at residue His124. Glu126 acts as the Proton donor in catalysis. Thr164 contacts (2E)-4-hydroxy-3-methylbut-2-enyl diphosphate. Cys192 serves as a coordination point for [4Fe-4S] cluster. The (2E)-4-hydroxy-3-methylbut-2-enyl diphosphate site is built by Ser220, Ser221, Asn222, and Ser263. Dimethylallyl diphosphate contacts are provided by Ser220, Ser221, Asn222, and Ser263. The isopentenyl diphosphate site is built by Ser220, Ser221, Asn222, and Ser263.

This sequence belongs to the IspH family. It depends on [4Fe-4S] cluster as a cofactor.

It catalyses the reaction isopentenyl diphosphate + 2 oxidized [2Fe-2S]-[ferredoxin] + H2O = (2E)-4-hydroxy-3-methylbut-2-enyl diphosphate + 2 reduced [2Fe-2S]-[ferredoxin] + 2 H(+). The enzyme catalyses dimethylallyl diphosphate + 2 oxidized [2Fe-2S]-[ferredoxin] + H2O = (2E)-4-hydroxy-3-methylbut-2-enyl diphosphate + 2 reduced [2Fe-2S]-[ferredoxin] + 2 H(+). It participates in isoprenoid biosynthesis; dimethylallyl diphosphate biosynthesis; dimethylallyl diphosphate from (2E)-4-hydroxy-3-methylbutenyl diphosphate: step 1/1. Its pathway is isoprenoid biosynthesis; isopentenyl diphosphate biosynthesis via DXP pathway; isopentenyl diphosphate from 1-deoxy-D-xylulose 5-phosphate: step 6/6. Catalyzes the conversion of 1-hydroxy-2-methyl-2-(E)-butenyl 4-diphosphate (HMBPP) into a mixture of isopentenyl diphosphate (IPP) and dimethylallyl diphosphate (DMAPP). Acts in the terminal step of the DOXP/MEP pathway for isoprenoid precursor biosynthesis. This Clostridioides difficile (strain 630) (Peptoclostridium difficile) protein is 4-hydroxy-3-methylbut-2-enyl diphosphate reductase.